The primary structure comprises 256 residues: Major prion protein (256 aa).

A signal peptide spans 1 to 24 (MVKSHIGSWILVLFVAMWSDVGLC). The interaction with GRB2, ERI3 and SYN1 stretch occupies residues 25–233 (KKRPKPGGGW…ESQAYYQRGA (209 aa)). Residues 28 to 110 (PKPGGGWNTG…QWNKPSKPKT (83 aa)) are disordered. 5 repeat units span residues 54-62 (PQGGGGWGQ), 63-70 (PHGGGWGQ), 71-78 (PHGGGWGQ), 79-86 (PHGGGWGQ), and 87-95 (PHGGGGWGQ). Residues 54 to 95 (PQGGGGWGQPHGGGWGQPHGGGWGQPHGGGWGQPHGGGGWGQ) are 5 X 8 AA tandem repeats of P-H-G-G-G-W-G-Q. Positions 55–97 (QGGGGWGQPHGGGWGQPHGGGWGQPHGGGWGQPHGGGGWGQGG) are enriched in gly residues. 12 residues coordinate Cu(2+): His-64, Gly-65, Gly-66, His-72, Gly-73, Gly-74, His-80, Gly-81, Gly-82, His-88, Gly-90, and Gly-91. Cysteines 182 and 217 form a disulfide. Residues Asn-184 and Asn-200 are each glycosylated (N-linked (GlcNAc...) (complex) asparagine). Ala-233 carries the GPI-anchor amidated alanine lipid modification. Residues 234 to 256 (SVILFSSPPVILLISFLIFLIVG) constitute a propeptide, removed in mature form.

This sequence belongs to the prion family. In terms of assembly, monomer and homodimer. Has a tendency to aggregate into amyloid fibrils containing a cross-beta spine, formed by a steric zipper of superposed beta-strands. Soluble oligomers may represent an intermediate stage on the path to fibril formation. Copper binding may promote oligomerization. Interacts with GRB2, APP, ERI3/PRNPIP and SYN1. Mislocalized cytosolically exposed PrP interacts with MGRN1; this interaction alters MGRN1 subcellular location and causes lysosomal enlargement. Interacts with KIAA1191.

It is found in the cell membrane. Its subcellular location is the golgi apparatus. Its function is as follows. Its primary physiological function is unclear. Has cytoprotective activity against internal or environmental stresses. May play a role in neuronal development and synaptic plasticity. May be required for neuronal myelin sheath maintenance. May play a role in iron uptake and iron homeostasis. Soluble oligomers are toxic to cultured neuroblastoma cells and induce apoptosis (in vitro). Association with GPC1 (via its heparan sulfate chains) targets PRNP to lipid rafts. Also provides Cu(2+) or Zn(2+) for the ascorbate-mediated GPC1 deaminase degradation of its heparan sulfate side chains. This chain is Major prion protein (PRNP), found in Ovis aries (Sheep).